A 1412-amino-acid chain; its full sequence is Sister chromatid cohesion protein PDS5 homolog B (1412 aa).

The HEAT repeat unit spans residues 383 to 419 (LLVNDHLLNFVRERTLDKRWRVRKEAMMGLAQIYKKY). Positions 1137–1412 (PLSSAGKQSQ…RRRTSKRERR (276 aa)) are disordered. Low complexity-rich tracts occupy residues 1139–1149 (SSAGKQSQSKS) and 1156–1167 (SNASSSSNPSSP). 4 stretches are compositionally biased toward basic and acidic residues: residues 1172-1184 (GRLDSTEMDHSEN), 1196-1212 (KKTDKRDDSDLSELEKP), 1223-1241 (SEEKLSIDDLNKLGQDQKL), and 1263-1272 (QEEKRLKEDV). Positions 1322 to 1331 (VEEEEEEEER) are enriched in acidic residues. Residues 1350-1362 (RTQQSRAGRSKQA) are compositionally biased toward polar residues. A compositionally biased stretch (acidic residues) spans 1386–1397 (VPQEEVMEEEEV). The span at 1402–1412 (VRRRTSKRERR) shows a compositional bias: basic residues.

As to quaternary structure, interacts with the cohesin complex.

It localises to the nucleus. Plays a role in androgen-induced proliferative arrest. Required for maintenance of sister chromatid cohesion during mitosis. The protein is Sister chromatid cohesion protein PDS5 homolog B (PDS5B) of Gallus gallus (Chicken).